The following is a 381-amino-acid chain: Cytochrome b (381 aa).

Transmembrane regions (helical) follow at residues 33–53 (FGSL…FLAM), 77–98 (WLLR…FLHV), 113–133 (WNIG…GYVL), and 178–198 (FFAF…VHLL). Heme b is bound by residues H83 and H97. Heme b-binding residues include H182 and H196. H201 lines the a ubiquinone pocket. The next 4 helical transmembrane spans lie at 226–246 (IKDA…ALFS), 288–308 (LGGV…PLLH), 320–340 (ISQT…WIGG), and 347–367 (FIII…VLMP).

It belongs to the cytochrome b family. The cytochrome bc1 complex contains 11 subunits: 3 respiratory subunits (MT-CYB, CYC1 and UQCRFS1), 2 core proteins (UQCRC1 and UQCRC2) and 6 low-molecular weight proteins (UQCRH/QCR6, UQCRB/QCR7, UQCRQ/QCR8, UQCR10/QCR9, UQCR11/QCR10 and a cleavage product of UQCRFS1). This cytochrome bc1 complex then forms a dimer. The cofactor is heme b.

The protein localises to the mitochondrion inner membrane. Its function is as follows. Component of the ubiquinol-cytochrome c reductase complex (complex III or cytochrome b-c1 complex) that is part of the mitochondrial respiratory chain. The b-c1 complex mediates electron transfer from ubiquinol to cytochrome c. Contributes to the generation of a proton gradient across the mitochondrial membrane that is then used for ATP synthesis. The protein is Cytochrome b (MT-CYB) of Pseudantechinus bilarni (Sandstone dibbler).